Reading from the N-terminus, the 510-residue chain is NAD(P)H-quinone oxidoreductase subunit 2, chloroplastic (510 aa).

12 consecutive transmembrane segments (helical) span residues 24-44 (LLLF…GLIL), 59-79 (WFYF…LFRW), 99-119 (IFQF…VEYI), 124-144 (MAIT…MFLC), 149-169 (LITI…LSGY), 183-203 (YLLM…WLYG), 229-249 (ISIA…PAPF), 295-315 (WHLL…LIAI), 323-343 (MLAY…IVGD), 347-367 (GYAS…GTFA), 395-415 (ALSS…AGFF), and 418-438 (LHLF…IGLL).

It belongs to the complex I subunit 2 family. As to quaternary structure, NDH is composed of at least 16 different subunits, 5 of which are encoded in the nucleus.

Its subcellular location is the plastid. It is found in the chloroplast thylakoid membrane. It catalyses the reaction a plastoquinone + NADH + (n+1) H(+)(in) = a plastoquinol + NAD(+) + n H(+)(out). The enzyme catalyses a plastoquinone + NADPH + (n+1) H(+)(in) = a plastoquinol + NADP(+) + n H(+)(out). NDH shuttles electrons from NAD(P)H:plastoquinone, via FMN and iron-sulfur (Fe-S) centers, to quinones in the photosynthetic chain and possibly in a chloroplast respiratory chain. The immediate electron acceptor for the enzyme in this species is believed to be plastoquinone. Couples the redox reaction to proton translocation, and thus conserves the redox energy in a proton gradient. The chain is NAD(P)H-quinone oxidoreductase subunit 2, chloroplastic from Allium textile (Textile onion).